Consider the following 360-residue polypeptide: MTVITVSLEKKQYQVKIDRRLHQEIGQAVSLVWTPRRIALLTDSHVGPLYLTAVQQQLEMSGFEVLPLQVPAGESSKSLKTVGELIGKMAEKGFTRDDGLIALGGGVIGDLGGVVASLYMRGIALIQIATSLTAQVDSSVGGKTAINLSHTKNIAGTFYQPDLVLVDPTYLDTLADRDLVEGYAEVVKTSVLAGGSFFDLTGRIYGVTDIRDNAEELSTRAVAYKAQVVMADEKEAGQRQFLNFGHTIGHAIELLAHGELRHGEAVAIGMIAMSSRMTRDGLTPASLTAALRARLETVDLPTTSDLIGTPAFFKHMVNDKKNRGGRLNLVVLKDIGQPMIVQKAIVDMPDFINENEGNNR.

Residues 106–110, 130–131, Lys-143, and Lys-152 contribute to the NAD(+) site; these read GVIGD and TS. Positions 185, 246, and 262 each coordinate Zn(2+).

This sequence belongs to the sugar phosphate cyclases superfamily. Dehydroquinate synthase family. Requires Co(2+) as cofactor. Zn(2+) is required as a cofactor. NAD(+) serves as cofactor.

It is found in the cytoplasm. The catalysed reaction is 7-phospho-2-dehydro-3-deoxy-D-arabino-heptonate = 3-dehydroquinate + phosphate. It participates in metabolic intermediate biosynthesis; chorismate biosynthesis; chorismate from D-erythrose 4-phosphate and phosphoenolpyruvate: step 2/7. Catalyzes the conversion of 3-deoxy-D-arabino-heptulosonate 7-phosphate (DAHP) to dehydroquinate (DHQ). This Leuconostoc citreum (strain KM20) protein is 3-dehydroquinate synthase.